We begin with the raw amino-acid sequence, 208 residues long: Putative adhesin P1-like protein MPN_468 (208 aa).

Disordered stretches follow at residues 29 to 49 (TNGSPAGNTSSTTQSNDVAPT) and 97 to 172 (DSKT…NLTP). A compositionally biased stretch (low complexity) spans 100–132 (TQNNTTTNENHTKFASATGSGQQQGSTTTTSAG). Residues 145 to 158 (SGNSISVQEATSGD) are compositionally biased toward polar residues. The segment covering 159 to 172 (NLTNYTNLPPNLTP) has biased composition (low complexity).

The protein belongs to the adhesin P1 family.

The polypeptide is Putative adhesin P1-like protein MPN_468 (Mycoplasma pneumoniae (strain ATCC 29342 / M129 / Subtype 1) (Mycoplasmoides pneumoniae)).